A 555-amino-acid polypeptide reads, in one-letter code: Hydroxylamine reductase (555 aa).

Positions 3, 6, 18, and 25 each coordinate [4Fe-4S] cluster. Hybrid [4Fe-2O-2S] cluster-binding residues include histidine 252, glutamate 276, cysteine 320, cysteine 407, cysteine 435, cysteine 460, glutamate 494, and lysine 496. The residue at position 407 (cysteine 407) is a Cysteine persulfide.

Belongs to the HCP family. [4Fe-4S] cluster is required as a cofactor. It depends on hybrid [4Fe-2O-2S] cluster as a cofactor.

Its subcellular location is the cytoplasm. The enzyme catalyses A + NH4(+) + H2O = hydroxylamine + AH2 + H(+). Catalyzes the reduction of hydroxylamine to form NH(3) and H(2)O. The polypeptide is Hydroxylamine reductase (Burkholderia lata (strain ATCC 17760 / DSM 23089 / LMG 22485 / NCIMB 9086 / R18194 / 383)).